The primary structure comprises 362 residues: Protein Tob1 (362 aa).

The Bipartite nuclear localization signal signature appears at 22 to 39 (RRRVNIFGEELERLLKKK). Residues 82–92 (VRGNLPQDLSV) are important for nuclear localization. Low complexity predominate over residues 144–160 (DPASSVSSSPSPPFGHS). Residues 144-171 (DPASSVSSSPSPPFGHSAAVSPTFMPRS) are disordered. The tract at residues 161 to 220 (AAVSPTFMPRSTQPLTFTTATFAATKFGSTKMKNSGRSSKVARTSPINLGLTVNVNDLLK) is required for interaction with CPEB3. Phosphothreonine is present on Thr-204. A Nuclear export signal motif is present at residues 228–236 (VHSLYGLGL). The segment at 234–284 (LGLGSQQQPQPQPQQQQQQQPSSSQPPPPLPQQQQQQPQQQQQQQQQTSAL) is disordered. 2 stretches are compositionally biased toward low complexity: residues 238–256 (SQQQPQPQPQQQQQQQPSS) and 265–280 (QQQQQQPQQQQQQQQQ).

Belongs to the BTG family. As to quaternary structure, interacts with ERBB2. Interacts with CNOT7. Interacts with CPEB3 (via C-terminal RNA-binding region); recruits CNOT7 to CPEB3 to form a ternary complex required for mRNA deadenylation and decay. Interacts with CNOT8. Interacts with CPEB4. In terms of processing, phosphorylated on Ser and Thr residues. As to expression, ubiquitous.

Its subcellular location is the cytoplasm. It is found in the nucleus. Its function is as follows. Anti-proliferative protein; the function is mediated by association with deadenylase subunits of the CCR4-NOT complex. Mediates CPEB3-accelerated mRNA deadenylation by binding to CPEB3 and recruiting CNOT7 which leads to target mRNA deadenylation and decay. The sequence is that of Protein Tob1 (Tob1) from Mus musculus (Mouse).